A 209-amino-acid polypeptide reads, in one-letter code: 3-demethoxyubiquinol 3-hydroxylase (209 aa).

Positions 58, 88, 91, 140, 172, and 175 each coordinate Fe cation.

Belongs to the COQ7 family. It depends on Fe cation as a cofactor.

The protein localises to the cell membrane. It carries out the reaction a 5-methoxy-2-methyl-3-(all-trans-polyprenyl)benzene-1,4-diol + AH2 + O2 = a 3-demethylubiquinol + A + H2O. It functions in the pathway cofactor biosynthesis; ubiquinone biosynthesis. Functionally, catalyzes the hydroxylation of 2-nonaprenyl-3-methyl-6-methoxy-1,4-benzoquinol during ubiquinone biosynthesis. The chain is 3-demethoxyubiquinol 3-hydroxylase from Polynucleobacter necessarius subsp. necessarius (strain STIR1).